Here is a 641-residue protein sequence, read N- to C-terminus: Mannosyl-oligosaccharide 1,2-alpha-mannosidase IB (641 aa).

N-acetylthreonine is present on Thr2. Over 2 to 36 (TTPALLPLSGRRIPPLNLGPPSFPHHRATLRLSEK) the chain is Cytoplasmic. The chain crosses the membrane as a helical; Signal-anchor for type II membrane protein span at residues 37 to 57 (FILLLILSAFITLCFGAFFFL). Residues 58–641 (PDSSKHKRFD…STLSGNPAVR (584 aa)) lie on the Lumenal side of the membrane. Cys462 and Cys494 are joined by a disulfide. Catalysis depends on Glu508, which acts as the Proton donor. Thr619 serves as a coordination point for Ca(2+). Asn631 carries an N-linked (GlcNAc...) asparagine glycan.

It belongs to the glycosyl hydrolase 47 family. Requires Ca(2+) as cofactor.

It localises to the golgi apparatus membrane. The enzyme catalyses N(4)-(alpha-D-Man-(1-&gt;2)-alpha-D-Man-(1-&gt;2)-alpha-D-Man-(1-&gt;3)-[alpha-D-Man-(1-&gt;2)-alpha-D-Man-(1-&gt;3)-[alpha-D-Man-(1-&gt;2)-alpha-D-Man-(1-&gt;6)]-alpha-D-Man-(1-&gt;6)]-beta-D-Man-(1-&gt;4)-beta-D-GlcNAc-(1-&gt;4)-beta-D-GlcNAc)-L-asparaginyl-[protein] (N-glucan mannose isomer 9A1,2,3B1,2,3) + 4 H2O = N(4)-(alpha-D-Man-(1-&gt;3)-[alpha-D-Man-(1-&gt;3)-[alpha-D-Man-(1-&gt;6)]-alpha-D-Man-(1-&gt;6)]-beta-D-Man-(1-&gt;4)-beta-D-GlcNAc-(1-&gt;4)-beta-D-GlcNAc)-L-asparaginyl-[protein] (N-glucan mannose isomer 5A1,2) + 4 beta-D-mannose. The catalysed reaction is N(4)-(alpha-D-Man-(1-&gt;2)-alpha-D-Man-(1-&gt;2)-alpha-D-Man-(1-&gt;3)-[alpha-D-Man-(1-&gt;3)-[alpha-D-Man-(1-&gt;2)-alpha-D-Man-(1-&gt;6)]-alpha-D-Man-(1-&gt;6)]-beta-D-Man-(1-&gt;4)-beta-D-GlcNAc-(1-&gt;4)-beta-D-GlcNAc)-L-asparaginyl-[protein] (N-glucan mannose isomer 8A1,2,3B1,3) + 3 H2O = N(4)-(alpha-D-Man-(1-&gt;3)-[alpha-D-Man-(1-&gt;3)-[alpha-D-Man-(1-&gt;6)]-alpha-D-Man-(1-&gt;6)]-beta-D-Man-(1-&gt;4)-beta-D-GlcNAc-(1-&gt;4)-beta-D-GlcNAc)-L-asparaginyl-[protein] (N-glucan mannose isomer 5A1,2) + 3 beta-D-mannose. It functions in the pathway protein modification; protein glycosylation. With respect to regulation, inhibited by both 1-deoxymannojirimycin and kifunensine. Its function is as follows. Involved in the maturation of Asn-linked oligosaccharides. Progressively trim alpha-1,2-linked mannose residues from Man(9)GlcNAc(2) to produce Man(5)GlcNAc(2). The chain is Mannosyl-oligosaccharide 1,2-alpha-mannosidase IB (Man1a2) from Mus musculus (Mouse).